Reading from the N-terminus, the 99-residue chain is C-C motif chemokine 17 (99 aa).

A signal peptide spans 1–23; it reads MMSLKLLLLVMLLLGASLQVTHA. Intrachain disulfides connect cysteine 33–cysteine 57 and cysteine 34–cysteine 73.

It belongs to the intercrine beta (chemokine CC) family. Expressed in thymus and also in spleen, lung, lymph node, kidney, small intestine, colon and skin.

It localises to the secreted. In terms of biological role, chemokine, which displays chemotactic activity for T lymphocytes, preferentially Th2 cells, but not monocytes or granulocytes. Therefore plays an important role in a wide range of inflammatory and immunological processes. Acts by binding to CCR4 at T-cell surface. Mediates GM-CSF/CSF2-driven pain and inflammation. In the brain, required to maintain the typical, highly branched morphology of hippocampal microglia under homeostatic conditions. May be important for the appropriate adaptation of microglial morphology and synaptic plasticity to acute lipopolysaccharide (LPS)-induced neuroinflammation. Plays a role in wound healing, mainly by inducing fibroblast migration into the wound. This is C-C motif chemokine 17 (CCL17) from Felis catus (Cat).